The chain runs to 179 residues: Large ribosomal subunit protein uL10 (179 aa).

This sequence belongs to the universal ribosomal protein uL10 family. Part of the ribosomal stalk of the 50S ribosomal subunit. The N-terminus interacts with L11 and the large rRNA to form the base of the stalk. The C-terminus forms an elongated spine to which L12 dimers bind in a sequential fashion forming a multimeric L10(L12)X complex.

Functionally, forms part of the ribosomal stalk, playing a central role in the interaction of the ribosome with GTP-bound translation factors. The polypeptide is Large ribosomal subunit protein uL10 (Kosmotoga olearia (strain ATCC BAA-1733 / DSM 21960 / TBF 19.5.1)).